We begin with the raw amino-acid sequence, 225 residues long: MEYQGQQHGRVDEYGNPVAGHGVGTGMGTHGGVGTGAAAGGHYQPMRDEHQTGRGILHRSGSSSSSSSEDDGMGGRRKKGIKEKIKEKLPGGHGDQQHNAGTYGYGQQGTGMAGTGGTYGQQGHTGMTGMGATDGTYGQQGHTGMAGTGAHGTAATGGTYGQQGHTGMTGTGMHGTGGTYGQQGHTGMTGTGMHGTGGTYGQHGTDTGEKKGIMDKIKEKLPGQH.

The tract at residues 1 to 78 is disordered; sequence MEYQGQQHGR…EDDGMGGRRK (78 aa). Gly residues predominate over residues 21–39; it reads HGVGTGMGTHGGVGTGAAA. Repeat copies occupy residues 105–118, 119–136, 137–159, 160–178, and 179–199. Positions 105 to 199 are 5 X approximate tandem repeats; the sequence is YGQQGTGMAG…GTGMHGTGGT (95 aa).

Belongs to the plant dehydrin family.

This chain is Dehydrin DHN4 (DHN4), found in Hordeum vulgare (Barley).